We begin with the raw amino-acid sequence, 484 residues long: Transmembrane protein 161B (484 aa).

The chain crosses the membrane as a helical span at residues 108–128 (LVDFTVAATVVYLITELYFCV). Asn-136 carries N-linked (GlcNAc...) asparagine glycosylation. Helical transmembrane passes span 137-157 (ISVVWSLLVLAFVMKILFSLT) and 170-190 (SLCITFAFFFFVKAMAILIVT). An N-linked (GlcNAc...) asparagine glycan is attached at Asn-204. 4 helical membrane passes run 229-249 (FKLILALLCALIGAFLTFPGL), 266-286 (VTQTLLHINFLAPLIMVLLWV), 368-388 (VFYYLCVIALQYIAPLVMLLH), and 456-476 (LSFFTWWIAACLFSTSLFGLF).

It belongs to the TMEM161 family.

Its subcellular location is the cell membrane. Its function is as follows. Essential for maintaining normal cardiac rhythm in the developing heart and for neonatal survival. Inhibits potassium and calcium currents in the cardiomyocytes, this assists in timely action potential repolarization and thereby maintains normal cardiac rhythm. This is Transmembrane protein 161B (tmem161b) from Danio rerio (Zebrafish).